The sequence spans 210 residues: Large ribosomal subunit protein uL3 (210 aa).

The disordered stretch occupies residues 125 to 154; sequence RHGFRGGPKTHGQSDRHRAPGSIGAGTTPG.

It belongs to the universal ribosomal protein uL3 family. As to quaternary structure, part of the 50S ribosomal subunit. Forms a cluster with proteins L14 and L19.

One of the primary rRNA binding proteins, it binds directly near the 3'-end of the 23S rRNA, where it nucleates assembly of the 50S subunit. This is Large ribosomal subunit protein uL3 from Chloroflexus aggregans (strain MD-66 / DSM 9485).